The sequence spans 793 residues: E3 UFM1-protein ligase 1 (793 aa).

A2 is modified (N-acetylalanine). The tract at residues 2–200 (ADAWEEIRRL…RGLFSAITRP (199 aa)) is mediates interaction with DDRGK1. The segment at 2 to 212 (ADAWEEIRRL…VNSLVSKYGF (211 aa)) is required for E3 UFM1-protein ligase activity. The interval 121 to 250 (DRLSEEVNDK…KAVFVPDIYS (130 aa)) is involved in CDK5RAP3-binding. The interval 200-400 (PTAVNSLVSK…NPVHLITEED (201 aa)) is mediates interaction with TRIP4. Residues 410–473 (VNTNKKDKKD…SSHAGKKKPD (64 aa)) form a disordered region. An Omega-N-methylarginine modification is found at R433. Residues S458 and S462 each carry the phosphoserine modification. Positions 490–683 (IPDAPEEFIS…QLKVTEDPAL (194 aa)) are mediates interaction with CDK5RAP3. T535 is modified (phosphothreonine). The disordered stretch occupies residues 742-769 (NKKSGQGEDPSSDDLDKEQHDVTNTTRK). A phosphoserine mark is found at S752 and S753. Residues 758-769 (KEQHDVTNTTRK) are compositionally biased toward basic and acidic residues.

It belongs to the UFL1 family. As to quaternary structure, catalytic component of the UFM1 ribosome E3 ligase (UREL) complex, composed of UFL1, DDRGK1 and CDK5RAP3. Interacts with E2-like enzyme UFC1. Interacts with RELA. Interacts with NBN; promoting recruitment to double-strand breaks following DNA damage. Interacts (when phosphorylated) with YWHAG/14-3-3-gamma; sequestering UFL1 and preventing its association with PDCD1/PD-1 substrate. In terms of processing, ubiquitinated, leading to its degradation by the proteasome. Interaction with CDK5RAP3 protects both proteins against ubiquitination and degradation via the proteasome. Phosphorylated at Ser-462 by ATM, enhancing protein ligase activity and promoting ATM activation in a positive feedback loop. Phosphorylation at Thr-535 by AMPK promotes its interaction with YWHAG/14-3-3-gamma, thereby preventing UFL1 association with PDCD1/PD-1 substrate. Ubiquitously expressed with expression detected in brain, skeletal muscle, lung, heart, gall bladder, liver, small intestine, pancreas, spleen and kidney (at protein level). At 8 weeks after birth, high expression in the Purkinje cell layer of the cerebellum.

The protein localises to the endoplasmic reticulum membrane. It is found in the cytoplasm. It localises to the cytosol. The protein resides in the nucleus. Its subcellular location is the chromosome. In terms of biological role, E3 protein ligase that mediates ufmylation, the covalent attachment of the ubiquitin-like modifier UFM1 to lysine residues on target proteins, and which plays a key role in various processes, such as ribosome recycling, response to DNA damage, interferon response or reticulophagy (also called ER-phagy). Catalyzes ufmylation of many protein, such as CD274/PD-L1, CDK5RAP3, CYB5R3, DDRGK1, EIF6, histone H4, MRE11, P4HB, PDCD1/PD-1, TRIP4, RPN1, RPS20/uS10, RPL10/uL16, RPL26/uL24, SYVN1/HRD1 and TP53/p53. As part of the UREL complex, plays a key role in ribosome recycling by catalyzing mono-ufmylation of RPL26/uL24 subunit of the 60S ribosome. Ufmylation of RPL26/uL24 occurs on free 60S ribosomes following ribosome dissociation: it weakens the junction between post-termination 60S subunits and SEC61 translocons, promoting release and recycling of the large ribosomal subunit from the endoplasmic reticulum membrane. Ufmylation of RPL26/uL24 and subsequent 60S ribosome recycling either take place after normal termination of translation or after ribosome stalling during cotranslational translocation at the endoplasmic reticulum. Involved in reticulophagy in response to endoplasmic reticulum stress by mediating ufmylation of proteins such as CYB5R3 and RPN1, thereby promoting lysosomal degradation of ufmylated proteins. Ufmylation in response to endoplasmic reticulum stress is essential for processes such as hematopoiesis, blood vessel morphogenesis or inflammatory response. Mediates ufmylation of DDRGK1 and CDK5RAP3; the role of these modifications is however unclear: as both DDRGK1 and CDK5RAP3 act as substrate adapters for ufmylation, it is uncertain whether ufmylation of these proteins is, a collateral effect or is required for ufmylation. Acts as a negative regulator of T-cell activation by mediating ufmylation and stabilization of PDCD1/PD-1. Also involved in the response to DNA damage: recruited to double-strand break sites following DNA damage and mediates monoufmylation of histone H4 and ufmylation of MRE11. Mediates ufmylation of TP53/p53, promoting its stability. Catalyzes ufmylation of TRIP4, thereby playing a role in nuclear receptor-mediated transcription. Required for hematopoietic stem cell function and hematopoiesis. This Rattus norvegicus (Rat) protein is E3 UFM1-protein ligase 1.